The following is a 540-amino-acid chain: Probable G-protein coupled receptor 75 (540 aa).

Over 1-46 the chain is Extracellular; it reads MNTSAPLQNVPNATLLNMPPLHGGNSTSLQEGLRDFIHTATLVTCT. N-linked (GlcNAc...) asparagine glycosylation is found at Asn-2 and Asn-25. A helical transmembrane segment spans residues 47–67; the sequence is FLLAIIFCLGSYGNFIVFLSF. The Cytoplasmic segment spans residues 68-86; that stretch reads FDPSFRKFRTNFDFMILNL. Residues 87-107 form a helical membrane-spanning segment; the sequence is SFCDLFICGVTAPMFTFVLFF. Residues 108–120 lie on the Extracellular side of the membrane; it reads SSASSIPDSFCFT. A helical transmembrane segment spans residues 121 to 141; sequence FHLTSSGFVIMSLKMVAVIAL. The Cytoplasmic portion of the chain corresponds to 142 to 160; that stretch reads HRLRMVMGKQPNCTASFSC. Residues 161–181 traverse the membrane as a helical segment; the sequence is ILLLTLLLWATSFTLATLATL. Topologically, residues 182–205 are extracellular; sequence RTNKSHLCLPMSSLMDGEGKAILS. The N-linked (GlcNAc...) asparagine glycan is linked to Asn-184. Residues 206–226 form a helical membrane-spanning segment; that stretch reads LYVVDFTFCVAVVSVSYIMIA. Topologically, residues 227–318 are cytoplasmic; it reads QTLRKNAQVK…INFSTAKDSK (92 aa). A helical membrane pass occupies residues 319–339; that stretch reads AVVTCVVIVLSVLVCCLPLGI. The Extracellular segment spans residues 340-350; the sequence is SLVQMVLSDNG. A helical membrane pass occupies residues 351-371; the sequence is SFILYQFELFGFTLIFFKSGL. Over 372–540 the chain is Cytoplasmic; it reads NPFIYSRNSA…SAKQIPIPSV (169 aa). The tract at residues 443 to 475 is disordered; sequence DQACGPSHSKESAASPKVSAGHQPCGQSSSTPI.

This sequence belongs to the G-protein coupled receptor 1 family. Highly expressed in brain and heart. Also detected in skeletal muscle, liver and kidney. Also expressed by islet cells (at protein level).

Its subcellular location is the cell membrane. G protein-coupled receptor that is activated by the chemokine CCL5/RANTES. Probably coupled to heterotrimeric Gq proteins, it stimulates inositol trisphosphate production and calcium mobilization upon activation. Together with CCL5/RANTES, may play a role in neuron survival through activation of a downstream signaling pathway involving the PI3, Akt and MAP kinases. CCL5/RANTES may also regulate insulin secretion by pancreatic islet cells through activation of this receptor. The protein is Probable G-protein coupled receptor 75 (Gpr75) of Mus musculus (Mouse).